The chain runs to 564 residues: Arginine--tRNA ligase (564 aa).

A 'HIGH' region motif is present at residues 122-132; the sequence is PNIAKPFSIGH.

The protein belongs to the class-I aminoacyl-tRNA synthetase family. As to quaternary structure, monomer.

The protein resides in the cytoplasm. It carries out the reaction tRNA(Arg) + L-arginine + ATP = L-arginyl-tRNA(Arg) + AMP + diphosphate. The sequence is that of Arginine--tRNA ligase from Lactococcus lactis subsp. cremoris (strain MG1363).